We begin with the raw amino-acid sequence, 338 residues long: Formamidase (338 aa).

The 247-residue stretch at 14-260 (LLIAAIQYPV…WEIVTAELFP (247 aa)) folds into the CN hydrolase domain. The active-site Proton acceptor is the Glu-60. Lys-133 acts as the Proton donor in catalysis. The Nucleophile role is filled by Cys-166.

Belongs to the carbon-nitrogen hydrolase superfamily. Aliphatic amidase family.

It carries out the reaction formamide + H2O = formate + NH4(+). Functionally, is an aliphatic amidase with a restricted substrate specificity, as it only hydrolyzes formamide. This Photorhabdus laumondii subsp. laumondii (strain DSM 15139 / CIP 105565 / TT01) (Photorhabdus luminescens subsp. laumondii) protein is Formamidase.